Consider the following 283-residue polypeptide: Acetyl-coenzyme A carboxylase carboxyl transferase subunit beta (283 aa).

The CoA carboxyltransferase N-terminal domain occupies 27–283 (VWVKCERCGE…LLDLHLRGEK (257 aa)). Residues cysteine 31, cysteine 34, cysteine 50, and cysteine 53 each coordinate Zn(2+). Residues 31-53 (CERCGEILFKKELDKNYKVCLKC) form a C4-type zinc finger.

This sequence belongs to the AccD/PCCB family. As to quaternary structure, acetyl-CoA carboxylase is a heterohexamer composed of biotin carboxyl carrier protein (AccB), biotin carboxylase (AccC) and two subunits each of ACCase subunit alpha (AccA) and ACCase subunit beta (AccD). The cofactor is Zn(2+).

The protein localises to the cytoplasm. The catalysed reaction is N(6)-carboxybiotinyl-L-lysyl-[protein] + acetyl-CoA = N(6)-biotinyl-L-lysyl-[protein] + malonyl-CoA. It functions in the pathway lipid metabolism; malonyl-CoA biosynthesis; malonyl-CoA from acetyl-CoA: step 1/1. Its function is as follows. Component of the acetyl coenzyme A carboxylase (ACC) complex. Biotin carboxylase (BC) catalyzes the carboxylation of biotin on its carrier protein (BCCP) and then the CO(2) group is transferred by the transcarboxylase to acetyl-CoA to form malonyl-CoA. The polypeptide is Acetyl-coenzyme A carboxylase carboxyl transferase subunit beta (Pelotomaculum thermopropionicum (strain DSM 13744 / JCM 10971 / SI)).